A 127-amino-acid chain; its full sequence is Large ribosomal subunit protein bL12 (127 aa).

This sequence belongs to the bacterial ribosomal protein bL12 family. As to quaternary structure, homodimer. Part of the ribosomal stalk of the 50S ribosomal subunit. Forms a multimeric L10(L12)X complex, where L10 forms an elongated spine to which 2 to 4 L12 dimers bind in a sequential fashion. Binds GTP-bound translation factors.

Functionally, forms part of the ribosomal stalk which helps the ribosome interact with GTP-bound translation factors. Is thus essential for accurate translation. This Chloroherpeton thalassium (strain ATCC 35110 / GB-78) protein is Large ribosomal subunit protein bL12.